Consider the following 589-residue polypeptide: Ectoderm-neural cortex protein 1 (589 aa).

In terms of domain architecture, BTB spans 46–114; it reads TDVLLHAGNR…AYSSRVIINE (69 aa). Kelch repeat units follow at residues 296–340, 341–388, 389–444, 446–492, 494–538, and 539–585; these read ALFL…AIGC, KVYI…ELKH, CLYV…SAKL, LFAF…VLGN, IFIM…ASGN, and KLYV…STWK.

Binds to RB1. Hypophosphorylated RB1 associates with ENC1 during neuronal differentiation, while hyperphosphorylated RB1 associates with ENC1 in undifferentiating cells. Part of a complex that contains CUL3, RBX1 and ENC1. Interacts indirectly with KEAP1. In terms of processing, ubiquitinated by E3 ubiquitin ligase complex formed by CUL3 and RBX1 and probably targeted for proteasome-independent degradation. Quinone-induced oxidative stress increases its ubiquitination. In terms of tissue distribution, detected in fetal brain tissue, moderate expression in fetal heart, lung and kidney. Highly expressed in adult brain, particularly high in the hippocampus and amygdala, and spinal cord. Detectable in adult pancreas. May be down-regulated in neuroblastoma tumors.

The protein resides in the nucleus matrix. The protein localises to the cytoplasm. It localises to the cytoskeleton. Functionally, actin-binding protein involved in the regulation of neuronal process formation and in differentiation of neural crest cells. Down-regulates transcription factor NF2L2/NRF2 by decreasing the rate of protein synthesis and not via a ubiquitin-mediated proteasomal degradation mechanism. The sequence is that of Ectoderm-neural cortex protein 1 (ENC1) from Homo sapiens (Human).